The primary structure comprises 374 residues: Chorismate synthase (374 aa).

Arg55 serves as a coordination point for NADP(+). FMN-binding positions include Arg132–Ser134, Gly293, Lys308–Ser312, and Arg335.

Belongs to the chorismate synthase family. Requires FMNH2 as cofactor.

The catalysed reaction is 5-O-(1-carboxyvinyl)-3-phosphoshikimate = chorismate + phosphate. The protein operates within metabolic intermediate biosynthesis; chorismate biosynthesis; chorismate from D-erythrose 4-phosphate and phosphoenolpyruvate: step 7/7. Functionally, catalyzes the anti-1,4-elimination of the C-3 phosphate and the C-6 proR hydrogen from 5-enolpyruvylshikimate-3-phosphate (EPSP) to yield chorismate, which is the branch point compound that serves as the starting substrate for the three terminal pathways of aromatic amino acid biosynthesis. This reaction introduces a second double bond into the aromatic ring system. The polypeptide is Chorismate synthase (Methanothermobacter thermautotrophicus (strain ATCC 29096 / DSM 1053 / JCM 10044 / NBRC 100330 / Delta H) (Methanobacterium thermoautotrophicum)).